The chain runs to 448 residues: Carbamoyl phosphate synthase arginine-specific small chain (448 aa).

The transit peptide at 1 to 27 (MFKNIARLASMARSAPRTTASFQTRFM) directs the protein to the mitochondrion. The Glutamine amidotransferase type-1 domain occupies 224 to 415 (HIAVIDCGVK…LGQVHQYRAA (192 aa)). Cysteine 304 acts as the Nucleophile in catalysis. Residues histidine 388 and glutamate 390 contribute to the active site.

The protein belongs to the CarA family. Heterodimer composed of 2 chains; the small (or glutamine) chain promotes the hydrolysis of glutamine to ammonia, which is used by the large (or ammonia) chain to synthesize carbamoyl phosphate.

The protein localises to the mitochondrion matrix. The enzyme catalyses hydrogencarbonate + L-glutamine + 2 ATP + H2O = carbamoyl phosphate + L-glutamate + 2 ADP + phosphate + 2 H(+). The catalysed reaction is L-glutamine + H2O = L-glutamate + NH4(+). It participates in amino-acid biosynthesis; L-arginine biosynthesis; carbamoyl phosphate from bicarbonate: step 1/1. In terms of biological role, small subunit of the arginine-specific carbamoyl phosphate synthase (CPSase). CPSase catalyzes the formation of carbamoyl phosphate from the ammonia moiety of glutamine, carbonate, and phosphate donated by ATP, the first step of the arginine biosynthetic pathway. The small subunit (glutamine amidotransferase) binds and cleaves glutamine to supply the large subunit with the substrate ammonia. The protein is Carbamoyl phosphate synthase arginine-specific small chain (CPA1) of Yarrowia lipolytica (strain CLIB 122 / E 150) (Yeast).